The following is a 103-amino-acid chain: Small ubiquitin-related modifier 2 (103 aa).

The Ubiquitin-like domain occupies 15–92 (AHINLKVKGQ…IDAMLHQTGG (78 aa)). A Glycyl lysine isopeptide (Gly-Lys) (interchain with K-? in acceptor proteins) cross-link involves residue Gly92.

The protein belongs to the ubiquitin family. SUMO subfamily. In terms of assembly, interacts with SAE2, SCE1, SIZ1 and MMS21. Interacts with HSFA2. Covalently attached to ABI5, FLD, GTE3, HSFA2 and ICE1.

The protein localises to the nucleus. It is found in the cytoplasm. In terms of biological role, ubiquitin-like protein which can be covalently attached to target lysines as a monomer. Does not seem to be involved in protein degradation and may function as an antagonist of ubiquitin in the degradation process. Required for the massive protein sumoylation in the nucleus induced by heat shock and controlled by SIZ1. This is Small ubiquitin-related modifier 2 from Arabidopsis thaliana (Mouse-ear cress).